The chain runs to 289 residues: uncharacterized protein (289 aa).

The active site involves glutamate 48.

Belongs to the PhzF family.

This is an uncharacterized protein from Pasteurella multocida (strain Pm70).